The primary structure comprises 344 residues: Anthranilate phosphoribosyltransferase (344 aa).

5-phospho-alpha-D-ribose 1-diphosphate-binding positions include G84, G87–D88, S92, N94–T97, K112–G120, and S124. G84 lines the anthranilate pocket. Residue S96 coordinates Mg(2+). N115 provides a ligand contact to anthranilate. R170 serves as a coordination point for anthranilate. Mg(2+) contacts are provided by D229 and E230.

It belongs to the anthranilate phosphoribosyltransferase family. In terms of assembly, homodimer. The cofactor is Mg(2+).

The enzyme catalyses N-(5-phospho-beta-D-ribosyl)anthranilate + diphosphate = 5-phospho-alpha-D-ribose 1-diphosphate + anthranilate. The protein operates within amino-acid biosynthesis; L-tryptophan biosynthesis; L-tryptophan from chorismate: step 2/5. In terms of biological role, catalyzes the transfer of the phosphoribosyl group of 5-phosphorylribose-1-pyrophosphate (PRPP) to anthranilate to yield N-(5'-phosphoribosyl)-anthranilate (PRA). This chain is Anthranilate phosphoribosyltransferase, found in Synechococcus sp. (strain RCC307).